The sequence spans 1018 residues: Cytadherence high molecular weight protein 1 (1018 aa).

Coiled coils occupy residues 782-815 (NRFLLIKKELQAELTRLIEENEQLKAEFLNAKDL) and 849-880 (ELVRNIQKAILENESKIKNIQITLKELKAVYK).

Phosphorylated mainly on serine residues.

The protein localises to the cell projection. It is found in the attachment organelle membrane. Functionally, component of the cytoskeleton-like structure which stabilizes the shape of the wall-less Mycoplasma. This cytoskeleton-like network of accessory proteins containing HMW proteins 1 to 5 allows the proper anchoring of cytadhesin proteins in the mycoplasmal membrane at the attachment organelle. The protein is Cytadherence high molecular weight protein 1 (hmw1) of Mycoplasma pneumoniae (strain ATCC 29342 / M129 / Subtype 1) (Mycoplasmoides pneumoniae).